The chain runs to 624 residues: Threonine--tRNA ligase (624 aa).

Residues 1–143 (MRLLFIHADE…SRTVTPEAAE (143 aa)) are editing domain. Positions 197 to 499 (AHVKLMREKE…EQEGKLPTLP (303 aa)) are catalytic. Cys289, His340, and His467 together coordinate Zn(2+). Residues 598-624 (LERETEGKPRVPLTIPDRLSRRPRFGR) are disordered.

This sequence belongs to the class-II aminoacyl-tRNA synthetase family. Homodimer. Zn(2+) is required as a cofactor.

It localises to the cytoplasm. It catalyses the reaction tRNA(Thr) + L-threonine + ATP = L-threonyl-tRNA(Thr) + AMP + diphosphate + H(+). Functionally, catalyzes the attachment of threonine to tRNA(Thr) in a two-step reaction: L-threonine is first activated by ATP to form Thr-AMP and then transferred to the acceptor end of tRNA(Thr). Also edits incorrectly charged L-seryl-tRNA(Thr). This is Threonine--tRNA ligase from Methanopyrus kandleri (strain AV19 / DSM 6324 / JCM 9639 / NBRC 100938).